The following is a 317-amino-acid chain: Protease 7 (317 aa).

Positions 1–20 are cleaved as a signal peptide; that stretch reads MRAKLLGIVLTTPIAISSFA. Residues 21–31 are Periplasmic-facing; that stretch reads STETLSFTPDN. The beta stranded transmembrane segment at 32–41 threads the bilayer; sequence INADISLGTL. At 42–69 the chain is on the extracellular side; it reads SGKTKERVYLAEEGGRKVSQLDWKFNNA. Residues 70-78 form a beta stranded membrane-spanning segment; sequence AIIKGAINW. Residues 79–83 lie on the Periplasmic side of the membrane; that stretch reads DLMPQ. The chain crosses the membrane as a beta stranded span at residues 84 to 92; sequence ISIGAAGWT. At 93-130 the chain is on the extracellular side; the sequence is TLGSRGGNMVDQDWMDSSNPGTWTDESRHPDTQLNYAN. Residues Asp103 and Asp105 contribute to the active site. Residues 131 to 140 form a beta stranded membrane-spanning segment; that stretch reads EFDLNIKGWL. The Periplasmic portion of the chain corresponds to 141–145; that stretch reads LNEPN. The beta stranded transmembrane segment at 146–156 threads the bilayer; the sequence is YRLGLMAGYQE. Residues 157–197 lie on the Extracellular side of the membrane; that stretch reads SRYSFTARGGSYIYSSEEGFRDDIGSFPNGERAIGYKQRFK. Residues 198 to 209 form a beta stranded membrane-spanning segment; sequence MPYIGLTGSYRY. Over 210 to 211 the chain is Periplasmic; sequence ED. A beta stranded membrane pass occupies residues 212 to 221; sequence FELGGTFKYS. Residues 222 to 250 lie on the Extracellular side of the membrane; the sequence is GWVESSDNDEHYDPGKRITYRSKVKDQNY. Active-site residues include Asp230 and His232. The chain crosses the membrane as a beta stranded span at residues 251–261; sequence YSVAVNAGYYV. The Periplasmic segment spans residues 262–264; that stretch reads TPN. A beta stranded transmembrane segment spans residues 265–274; the sequence is AKVYVEGAWN. Over 275–306 the chain is Extracellular; that stretch reads RVTNKKGNTSLYDHNNNTSDYSKNGAGIENYN. The beta stranded transmembrane segment at 307-316 threads the bilayer; that stretch reads FITTAGLKYT. Residue Phe317 is a topological domain, periplasmic.

It belongs to the peptidase A26 family. Homopentamer.

The protein resides in the cell outer membrane. The catalysed reaction is Has a virtual requirement for Arg in the P1 position and a slightly less stringent preference for this residue in the P1' position, which can also contain Lys, Gly or Val.. With respect to regulation, inhibited by zinc. In terms of biological role, protease that can cleave T7 RNA polymerase, ferric enterobactin receptor protein (FEP), antimicrobial peptide protamine and other proteins. This protease has a specificity for paired basic residues. The sequence is that of Protease 7 (ompT) from Escherichia coli (strain K12).